We begin with the raw amino-acid sequence, 124 residues long: Glycine cleavage system H protein (124 aa).

The region spanning 19 to 101 (VATVGITNHA…EGEGWLFKME (83 aa)) is the Lipoyl-binding domain. The residue at position 60 (lysine 60) is an N6-lipoyllysine.

The protein belongs to the GcvH family. In terms of assembly, the glycine cleavage system is composed of four proteins: P, T, L and H. It depends on (R)-lipoate as a cofactor.

Its function is as follows. The glycine cleavage system catalyzes the degradation of glycine. The H protein shuttles the methylamine group of glycine from the P protein to the T protein. In Thermotoga maritima (strain ATCC 43589 / DSM 3109 / JCM 10099 / NBRC 100826 / MSB8), this protein is Glycine cleavage system H protein.